A 386-amino-acid chain; its full sequence is DNA-directed RNA polymerase subunit Rpo1C (386 aa).

The protein belongs to the RNA polymerase beta' chain family. As to quaternary structure, part of the RNA polymerase complex.

Its subcellular location is the cytoplasm. It carries out the reaction RNA(n) + a ribonucleoside 5'-triphosphate = RNA(n+1) + diphosphate. DNA-dependent RNA polymerase (RNAP) catalyzes the transcription of DNA into RNA using the four ribonucleoside triphosphates as substrates. Forms part of the jaw domain. In Methanococcus maripaludis (strain DSM 14266 / JCM 13030 / NBRC 101832 / S2 / LL), this protein is DNA-directed RNA polymerase subunit Rpo1C.